A 166-amino-acid chain; its full sequence is Phosphopantetheine adenylyltransferase (166 aa).

Thr9 contributes to the substrate binding site. Residues 9 to 10 and His17 contribute to the ATP site; that span reads TF. Substrate-binding residues include Lys41, Leu78, and Arg92. ATP contacts are provided by residues 93-95, Glu103, and 128-134; these read GLR and HQAIASK.

Belongs to the bacterial CoaD family. As to quaternary structure, homohexamer. It depends on Mg(2+) as a cofactor.

Its subcellular location is the cytoplasm. The enzyme catalyses (R)-4'-phosphopantetheine + ATP + H(+) = 3'-dephospho-CoA + diphosphate. Its pathway is cofactor biosynthesis; coenzyme A biosynthesis; CoA from (R)-pantothenate: step 4/5. Reversibly transfers an adenylyl group from ATP to 4'-phosphopantetheine, yielding dephospho-CoA (dPCoA) and pyrophosphate. The protein is Phosphopantetheine adenylyltransferase of Roseobacter denitrificans (strain ATCC 33942 / OCh 114) (Erythrobacter sp. (strain OCh 114)).